The following is a 118-amino-acid chain: Small ribosomal subunit protein mS37 (118 aa).

One can recognise a CHCH domain in the interval 42–84 (EATCITEMSMMMACWKQNEFRDEACRKEIQDFFDCSSRAQEAR). 2 consecutive short sequence motifs (cx9C motif) follow at residues 45–55 (CITEMSMMMAC) and 66–76 (CRKEIQDFFDC). 2 cysteine pairs are disulfide-bonded: C45/C76 and C55/C66. Residues 86–105 (MRSIQESLGQSESLSPHKMT) form a disordered region. The span at 89–99 (IQESLGQSESL) shows a compositional bias: polar residues.

Belongs to the mitochondrion-specific ribosomal protein mS37 family. Component of the mitochondrial ribosome small subunit (28S) which comprises a 12S rRNA and about 30 distinct proteins.

The protein resides in the mitochondrion. The protein localises to the nucleus. The chain is Small ribosomal subunit protein mS37 (Chchd1) from Mus musculus (Mouse).